A 965-amino-acid chain; its full sequence is Fibronectin-binding protein A (965 aa).

The first 36 residues, 1–36 (MKNNLRYGIRKHKLGAASVFLGTMIVIGMGQDKEAA), serve as a signal peptide directing secretion. A YSIRK-G/S signaling motif motif is present at residues 7–18 (YGIRKHKLGAAS). Residues 37–206 (ASEQKTTTVE…VTSKVTVEDE (170 aa)) form a disordered region. Residues 37-514 (ASEQKTTTVE…SNKANGDGKY (478 aa)) form a ligand-binding A region region. Residues 39 to 55 (EQKTTTVEENGNSATDN) show a composition bias toward polar residues. The segment covering 59 to 74 (ETQTTTTNVNTIDETQ) has biased composition (low complexity). Polar residues predominate over residues 75-92 (SYSATATEQPSNATQVTT). Over residues 112-122 (TVKEEVVKEEA) the composition is skewed to basic and acidic residues. Residues 126-139 (VKETTQSQDNSGDQ) show a composition bias toward polar residues. Residues 179-193 (DVAEAKEASDAKVET) are compositionally biased toward basic and acidic residues. Residues 194-514 (GTDVTSKVTV…SNKANGDGKY (321 aa)) form a fibrinogen/elastin/tropoelastin-binding region. A fibronectin-binding region spans residues 515-837 (GPIVDSNNFE…EGQQTIEEDT (323 aa)). A B-1 repeat occupies 548–577 (ENQDNTPLDIDYHTAIDGEGGYVDGYIETI). Positions 548 to 607 (ENQDNTPLDIDYHTAIDGEGGYVDGYIETIEETDSSAIDIDYHTAVDSEAGHVGGYTESS) are 2 X approximate tandem repeats. The B-2 repeat unit spans residues 578-607 (EETDSSAIDIDYHTAVDSEAGHVGGYTESS). Disordered stretches follow at residues 598 to 625 (GHVGGYTESSEESNPIDFEESTHENSKH), 743 to 774 (LGYEGGQNSGNQSFEEDTEEDKPKYEQGGNII), 794 to 903 (IEED…GKVV), and 916 to 942 (VAPTKQKQAKKSELPETGGEESTNKGM). A D-1; truncated repeat occupies 748 to 770 (GQNSGNQSFEEDTEEDKPKYEQG). Residues 748–839 (GQNSGNQSFE…QQTIEEDTTP (92 aa)) are 4 X approximate tandem repeats. A D-2; truncated repeat occupies 771–785 (GNIIDIDFDSVPQIH). Residues 786-824 (GFNKHNEIIEEDTNKDKPNYQFGGHNSVDFEEDTLPKVS) form a D-3 repeat. Residues 794–803 (IEEDTNKDKP) show a composition bias toward basic and acidic residues. Residues 825–839 (GQNEGQQTIEEDTTP) form a D-4; truncated repeat. The segment covering 839-885 (PPTPPTPEVPSEPGTPTPPTPEVPSEPGKPTPPTPEVPAEPGKPVPP) has biased composition (pro residues). 4 WR repeats span residues 840–853 (PTPPTPEVPSEPGT), 854–867 (PTPPTPEVPSEPGK), 868–881 (PTPPTPEVPAEPGK), and 882–895 (PVPPAKEEPKKPSK). Residues 840 to 895 (PTPPTPEVPSEPGTPTPPTPEVPSEPGKPTPPTPEVPAEPGKPVPPAKEEPKKPSK) are 4 X tandem repeats, Pro-rich (WR). The LPXTG sorting signal signature appears at 929-933 (LPETG). Position 932 is a pentaglycyl murein peptidoglycan amidated threonine (T932). Residues 933–965 (GGEESTNKGMLFGGLFSILGLALLRRNKKNHKA) constitute a propeptide, removed by sortase.

The protein localises to the secreted. The protein resides in the cell wall. Promotes bacterial attachment to multiple substrates, such as fibronectin (Fn), fibrinogen (Fg), elastin peptides and tropoelastin. This confers to S.aureus the ability to invade endothelial cells. Promotes adherence to and aggregation of activated platelets. This Staphylococcus aureus (strain MRSA252) protein is Fibronectin-binding protein A (fnbA).